Consider the following 366-residue polypeptide: Histidinol-phosphate aminotransferase 2 (366 aa).

Over residues 1–11 (MQVKDQLSSLQ) the composition is skewed to polar residues. Residues 1–21 (MQVKDQLSSLQPYKPGKSPEQ) form a disordered region. At lysine 222 the chain carries N6-(pyridoxal phosphate)lysine.

It belongs to the class-II pyridoxal-phosphate-dependent aminotransferase family. Histidinol-phosphate aminotransferase subfamily. As to quaternary structure, homodimer. It depends on pyridoxal 5'-phosphate as a cofactor.

It catalyses the reaction L-histidinol phosphate + 2-oxoglutarate = 3-(imidazol-4-yl)-2-oxopropyl phosphate + L-glutamate. It functions in the pathway amino-acid biosynthesis; L-histidine biosynthesis; L-histidine from 5-phospho-alpha-D-ribose 1-diphosphate: step 7/9. The sequence is that of Histidinol-phosphate aminotransferase 2 (hisC2) from Bacillus anthracis.